The chain runs to 132 residues: Small ribosomal subunit protein uS8 (132 aa).

The protein belongs to the universal ribosomal protein uS8 family. Part of the 30S ribosomal subunit. Contacts proteins S5 and S12.

One of the primary rRNA binding proteins, it binds directly to 16S rRNA central domain where it helps coordinate assembly of the platform of the 30S subunit. The sequence is that of Small ribosomal subunit protein uS8 from Rhizobium meliloti (strain 1021) (Ensifer meliloti).